A 461-amino-acid polypeptide reads, in one-letter code: Photosystem II CP43 reaction center protein (461 aa).

Positions 1 to 2 (ME) are excised as a propeptide. N-acetylthreonine is present on threonine 3. Threonine 3 carries the phosphothreonine modification. The next 5 membrane-spanning stretches (helical) occupy residues 57-81 (LFEVAHFIPEKPMYEQGLILLPHLA), 122-143 (LIGPETLEESFPFFGYVWKDKN), 166-188 (KAMYFGGLFDPWSVGGGDVRVIT), 243-263 (KPWAWARRAFVWSGEAYLSYS), and 279-300 (WFNNTVYPSEFYGPTGPEASQS). Residue glutamate 355 coordinates [CaMn4O5] cluster. A helical membrane pass occupies residues 435-459 (RARAAAAGFEKGIDRDNEPVLSMKP).

This sequence belongs to the PsbB/PsbC family. PsbC subfamily. In terms of assembly, PSII is composed of 1 copy each of membrane proteins PsbA, PsbB, PsbC, PsbD, PsbE, PsbF, PsbH, PsbI, PsbJ, PsbK, PsbL, PsbM, PsbT, PsbX, PsbY, PsbZ, Psb30/Ycf12, at least 3 peripheral proteins of the oxygen-evolving complex and a large number of cofactors. It forms dimeric complexes. It depends on Binds multiple chlorophylls and provides some of the ligands for the Ca-4Mn-5O cluster of the oxygen-evolving complex. It may also provide a ligand for a Cl- that is required for oxygen evolution. PSII binds additional chlorophylls, carotenoids and specific lipids. as a cofactor.

It is found in the plastid. The protein resides in the chloroplast thylakoid membrane. One of the components of the core complex of photosystem II (PSII). It binds chlorophyll and helps catalyze the primary light-induced photochemical processes of PSII. PSII is a light-driven water:plastoquinone oxidoreductase, using light energy to abstract electrons from H(2)O, generating O(2) and a proton gradient subsequently used for ATP formation. In Tupiella akineta (Green alga), this protein is Photosystem II CP43 reaction center protein.